The chain runs to 443 residues: Methyl-coenzyme M reductase I subunit beta (443 aa).

Coenzyme M is bound at residue Tyr-367. A coenzyme B-binding site is contributed by Gly-369.

The protein belongs to the methyl-coenzyme M reductase beta subunit family. In terms of assembly, MCR is a hexamer of two alpha, two beta, and two gamma chains, forming a dimer of heterotrimers. Coenzyme F430 is required as a cofactor.

Its subcellular location is the cytoplasm. The enzyme catalyses coenzyme B + methyl-coenzyme M = methane + coenzyme M-coenzyme B heterodisulfide. The protein operates within one-carbon metabolism; methyl-coenzyme M reduction; methane from methyl-coenzyme M: step 1/1. Its function is as follows. Component of the methyl-coenzyme M reductase (MCR) I that catalyzes the reductive cleavage of methyl-coenzyme M (CoM-S-CH3 or 2-(methylthio)ethanesulfonate) using coenzyme B (CoB or 7-mercaptoheptanoylthreonine phosphate) as reductant which results in the production of methane and the mixed heterodisulfide of CoB and CoM (CoM-S-S-CoB). This is the final step in methanogenesis. In Methanothermobacter thermautotrophicus (strain ATCC 29096 / DSM 1053 / JCM 10044 / NBRC 100330 / Delta H) (Methanobacterium thermoautotrophicum), this protein is Methyl-coenzyme M reductase I subunit beta (mcrB).